A 508-amino-acid chain; its full sequence is Lysine--tRNA ligase (508 aa).

2 residues coordinate Mg(2+): Glu418 and Glu425.

Belongs to the class-II aminoacyl-tRNA synthetase family. As to quaternary structure, homodimer. Mg(2+) serves as cofactor.

The protein localises to the cytoplasm. It catalyses the reaction tRNA(Lys) + L-lysine + ATP = L-lysyl-tRNA(Lys) + AMP + diphosphate. The sequence is that of Lysine--tRNA ligase from Burkholderia pseudomallei (strain 1710b).